Consider the following 123-residue polypeptide: Small ribosomal subunit protein uS12 (123 aa).

Asp-89 bears the 3-methylthioaspartic acid mark.

Belongs to the universal ribosomal protein uS12 family. Part of the 30S ribosomal subunit. Contacts proteins S8 and S17. May interact with IF1 in the 30S initiation complex.

Its function is as follows. With S4 and S5 plays an important role in translational accuracy. Functionally, interacts with and stabilizes bases of the 16S rRNA that are involved in tRNA selection in the A site and with the mRNA backbone. Located at the interface of the 30S and 50S subunits, it traverses the body of the 30S subunit contacting proteins on the other side and probably holding the rRNA structure together. The combined cluster of proteins S8, S12 and S17 appears to hold together the shoulder and platform of the 30S subunit. The chain is Small ribosomal subunit protein uS12 from Bartonella bacilliformis (strain ATCC 35685 / KC583 / Herrer 020/F12,63).